Consider the following 1147-residue polypeptide: MATIVPCSLEKEEGAPSGPRRLQTEIDVDANDSGNELSMGGSSSEGDSMSHHRGEHSPNHHHQDNHLGSGPPPPQFTGSLFDTPPSMIQSPQQQPQFQFNTGFGLGLPQDSFRCSVCSKSSTIGVLPFVCAHKTCQSCYQMTPSSYDRRACKLCGAVSTATANFTSQMYLSPTLPSPPRGALMSDCSTPTMNNHINSSTPLHQPRAFSFSLSGMPGSPSPVMGARMPSSAGGLMMRPIGFPDSDSSLTSWSPLQQPSQLSINNLSSIGGHQQQSPMLMQNVFDSLAVNDDTPVFSPLSPTNTSMHMPPSLMASPDVPKHSATIAPPRNSMCSTPRLQLATPMSSQSQQTFPIPSPLGSQPQQQQPMGPIQCQGCESKISFAYCMQCQEALCIHCVQAHQRVRATKQHAFVELQQLMATLMSRAVQPQQAQQYTQNVGGSVRQALGSVGSGDVFFSGHVSGVENDSIGSGESSPRSSSVCGTHDSVIIGICENCPHSVLLCAICVAQHPGKHRVQPLGDIRVAVGEVVNESQLLQWQCEKTGDTIKQIIDGIVTNATTAENEIRAAFDTHVNALEERRKELLKRVETVKNLKLSVLISQAESLQSKQIDLQQAIQTATKLMDSSDCDEMVLRQVFEKLASCQMGNEGTEPNNNILNVLMLACQVNEDDRLKFTAPQDGILLNKARQFGNIESGPCAKNSSIVGDSFKKAIRERQTVIYVQLRDACGDLLSSSIAATQPTSQALLPHQEPHSHLEQAMPTSDVQAFVISPDGSTVEVTMTPRENGIVALSYYPSIEGSYTLNILVKGTPISGCPTTMDIRRGRNYDEIAAKGPILTFGKEGSGDGELCRPWGICVDQRGRVIVADRSNNRVQIFDKDGNFISKFGTSGNRPGQFDRPAGITTNSLNNIVVADKDNHRVQVFDENGMFLLKFGDRGRAVGYFNYPWGVATNSHNAIAVSDTRNHRVQIFTPQGQFVRKCGFDSAYFFKNLDSPRGLCYLPDGQLLITDFNNHRLAVLSPRNMSEMKVYGSEGDGDGMFVRPQGVVIDPEGHILVCDSRNNRVQVFASDDMRFIGSFGLGPVPNSGFQMPQELPAPYSSLGGPFGAPAFSSAPTPLTPSPRQLLDRPTDLAVGPDGRIYVVDFGNNCIRVF.

The disordered stretch occupies residues 1-93; it reads MATIVPCSLE…PPSMIQSPQQ (93 aa). Residues 33–47 show a composition bias toward low complexity; it reads SGNELSMGGSSSEGD. Over residues 48-65 the composition is skewed to basic and acidic residues; that stretch reads SMSHHRGEHSPNHHHQDN. Low complexity predominate over residues 84–93; it reads PPSMIQSPQQ. The RING-type zinc-finger motif lies at 114 to 155; it reads CSVCSKSSTIGVLPFVCAHKTCQSCYQMTPSSYDRRACKLCG. The segment at 366–412 adopts a B box-type; atypical zinc-finger fold; sequence MGPIQCQGCESKISFAYCMQCQEALCIHCVQAHQRVRATKQHAFVEL. The Zn(2+) site is built by Cys371, Cys374, Cys394, and His398. Residues 565 to 618 are a coiled coil; that stretch reads AFDTHVNALEERRKELLKRVETVKNLKLSVLISQAESLQSKQIDLQQAIQTATK. Residues 723–817 form a Filamin repeat; sequence ACGDLLSSSI…ISGCPTTMDI (95 aa). 6 NHL repeats span residues 832–875, 879–922, 926–969, 974–1017, 1022–1065, and 1107–1147; these read ILTF…FDKD, ISKF…FDEN, LLKF…FTPQ, RKCG…LSPR, MKVY…FASD, and SAPT…IRVF. The tract at residues 1104-1123 is disordered; sequence AFSSAPTPLTPSPRQLLDRP.

It belongs to the TRIM/RBCC family.

The protein localises to the cytoplasm. Its subcellular location is the P-body. Heterochronic protein which acts downstream of let-7 in temporal patterning. Plays a role in the developmental timing of postembryonic hypodermal seam cell division and fusion events and adult alae production. Represses lin-29 during late larval stages, which prevents terminal differentiation of hypodermal seam cells and promotes their division. Involved in post-transcriptional gene regulation, uses two independent pathways. Has direct and specific RNA-binding activity and, depending on the location (5'UTR or 3'UTR) of the target site, triggers either mRNA decay or repression of translation. Degrades the mRNA of transcription factor dmd-3 to govern the timing and extent of male tail tip morphogenesis. Plays a role in the sexual maturation of the nervous system. This chain is Protein lin-41, found in Caenorhabditis elegans.